Consider the following 235-residue polypeptide: Leucyl/phenylalanyl-tRNA--protein transferase (235 aa).

The protein belongs to the L/F-transferase family.

The protein localises to the cytoplasm. It catalyses the reaction N-terminal L-lysyl-[protein] + L-leucyl-tRNA(Leu) = N-terminal L-leucyl-L-lysyl-[protein] + tRNA(Leu) + H(+). It carries out the reaction N-terminal L-arginyl-[protein] + L-leucyl-tRNA(Leu) = N-terminal L-leucyl-L-arginyl-[protein] + tRNA(Leu) + H(+). The enzyme catalyses L-phenylalanyl-tRNA(Phe) + an N-terminal L-alpha-aminoacyl-[protein] = an N-terminal L-phenylalanyl-L-alpha-aminoacyl-[protein] + tRNA(Phe). Functions in the N-end rule pathway of protein degradation where it conjugates Leu, Phe and, less efficiently, Met from aminoacyl-tRNAs to the N-termini of proteins containing an N-terminal arginine or lysine. The protein is Leucyl/phenylalanyl-tRNA--protein transferase of Magnetococcus marinus (strain ATCC BAA-1437 / JCM 17883 / MC-1).